The following is a 333-amino-acid chain: 4-hydroxyproline epimerase (333 aa).

The active-site Proton acceptor is the C90. Substrate contacts are provided by residues 91 to 92 (GH) and D249. The active-site Proton donor is the C253. A substrate-binding site is contributed by 254–255 (GT).

The protein belongs to the proline racemase family. As to quaternary structure, homodimer.

The catalysed reaction is trans-4-hydroxy-L-proline = cis-4-hydroxy-D-proline. With respect to regulation, inhibited by iodoacetate, iodoacetamide and by high amounts (10 mM) of pyrrole-2-carboxylic acid (PYC). Not inhibited by PYC at 1 mM. In terms of biological role, allows intracellular utilization of 4-hydroxyproline, one of the major constituents of host collagen, by converting 4-hydroxy-L-proline to 4-hydroxy-D-proline, which can be further metabolized by intracellular 4-hydroxy-D-proline oxidases. Strong B-cell mitogen. Plays an important role in the regulation of intra- and extracellular amino acid pools, allowing the bacterium to profit from host precursors and enzymatic pathways. In Brucella melitensis biotype 1 (strain ATCC 23456 / CCUG 17765 / NCTC 10094 / 16M), this protein is 4-hydroxyproline epimerase.